The primary structure comprises 396 residues: MAKAKFERTKPHVNIGTIGHVDHGKTTLTAAISKVLYDQYPDLNEQRDFASIDSAPEERQRGITINISHVEYQTEKRHYAHVDAPGHADYIKNMITGAAQMDGAILVVAATDGPMAQTREHVLLARQVGVPYLLVALNKSDMVDDEELLDLVEMEVRELLSSQGFDGDEAPVVRVSGLKALEGDPVWVKSVQDLMAAVDESVPDPVRDRDKPFLMPIEDVFTITGRGTVVTGRAERGTLAINSEVEIVGIRPIQKTTVTGIEMFHKQLDEAWAGENCGLLLRGLKRDDVERGQVVVKPGSITPHTDFEANVYILSKDEGGRHNPFYSNYRPQFYFRTTDVTGVITLPEGTEMVMPGDNTEMTVALIQPIAMEEGLGFAIREGGRTVGSGRVTSIIK.

A tr-type G domain is found at 10–206 (KPHVNIGTIG…AVDESVPDPV (197 aa)). A G1 region spans residues 19–26 (GHVDHGKT). 19–26 (GHVDHGKT) contributes to the GTP binding site. A Mg(2+)-binding site is contributed by T26. The G2 stretch occupies residues 62 to 66 (GITIN). The segment at 83-86 (DAPG) is G3. GTP-binding positions include 83-87 (DAPGH) and 138-141 (NKSD). The interval 138–141 (NKSD) is G4. Positions 176 to 178 (SGL) are G5.

The protein belongs to the TRAFAC class translation factor GTPase superfamily. Classic translation factor GTPase family. EF-Tu/EF-1A subfamily. As to quaternary structure, monomer.

The protein localises to the cytoplasm. The catalysed reaction is GTP + H2O = GDP + phosphate + H(+). Functionally, GTP hydrolase that promotes the GTP-dependent binding of aminoacyl-tRNA to the A-site of ribosomes during protein biosynthesis. The sequence is that of Elongation factor Tu from Paenarthrobacter aurescens (strain TC1).